Consider the following 261-residue polypeptide: tRNA pseudouridine synthase A (261 aa).

Asp-51 acts as the Nucleophile in catalysis. Tyr-109 contributes to the substrate binding site.

This sequence belongs to the tRNA pseudouridine synthase TruA family. Homodimer.

It carries out the reaction uridine(38/39/40) in tRNA = pseudouridine(38/39/40) in tRNA. Functionally, formation of pseudouridine at positions 38, 39 and 40 in the anticodon stem and loop of transfer RNAs. This is tRNA pseudouridine synthase A from Shewanella baltica (strain OS195).